The chain runs to 164 residues: Ribosomal RNA large subunit methyltransferase H (164 aa).

Glycine 109 contributes to the S-adenosyl-L-methionine binding site.

This sequence belongs to the RNA methyltransferase RlmH family. As to quaternary structure, homodimer.

It is found in the cytoplasm. It carries out the reaction pseudouridine(1915) in 23S rRNA + S-adenosyl-L-methionine = N(3)-methylpseudouridine(1915) in 23S rRNA + S-adenosyl-L-homocysteine + H(+). Functionally, specifically methylates the pseudouridine at position 1915 (m3Psi1915) in 23S rRNA. The polypeptide is Ribosomal RNA large subunit methyltransferase H (Methylobacterium radiotolerans (strain ATCC 27329 / DSM 1819 / JCM 2831 / NBRC 15690 / NCIMB 10815 / 0-1)).